Reading from the N-terminus, the 401-residue chain is Ribosomal RNA dihydrouridine synthase (401 aa).

Residues A15, D34, N35, R41, G47, N52, V132, E371, and F384 each coordinate FAD.

Belongs to the BaiN/RdsA family. RdsA subfamily. Requires FAD as cofactor.

It catalyses the reaction a 5,6-dihydrouridine in mRNA + NAD(+) = a uridine in mRNA + NADH + H(+). Catalyzes the synthesis of 5,6-dihydrouridine (D) at position 2449 in 23S rRNA. In Haemophilus influenzae (strain ATCC 51907 / DSM 11121 / KW20 / Rd), this protein is Ribosomal RNA dihydrouridine synthase.